A 361-amino-acid polypeptide reads, in one-letter code: Chorismate synthase (361 aa).

NADP(+) is bound by residues arginine 48 and arginine 54. FMN is bound by residues 125 to 127 (RSS), 238 to 239 (NA), glycine 278, 293 to 297 (KPTSS), and arginine 319.

The protein belongs to the chorismate synthase family. Homotetramer. Requires FMNH2 as cofactor.

The catalysed reaction is 5-O-(1-carboxyvinyl)-3-phosphoshikimate = chorismate + phosphate. It participates in metabolic intermediate biosynthesis; chorismate biosynthesis; chorismate from D-erythrose 4-phosphate and phosphoenolpyruvate: step 7/7. Its function is as follows. Catalyzes the anti-1,4-elimination of the C-3 phosphate and the C-6 proR hydrogen from 5-enolpyruvylshikimate-3-phosphate (EPSP) to yield chorismate, which is the branch point compound that serves as the starting substrate for the three terminal pathways of aromatic amino acid biosynthesis. This reaction introduces a second double bond into the aromatic ring system. The chain is Chorismate synthase from Shigella boydii serotype 18 (strain CDC 3083-94 / BS512).